The chain runs to 466 residues: 3-isopropylmalate dehydratase large subunit 1 (466 aa).

The [4Fe-4S] cluster site is built by C347, C407, and C410.

This sequence belongs to the aconitase/IPM isomerase family. LeuC type 1 subfamily. Heterodimer of LeuC and LeuD. The cofactor is [4Fe-4S] cluster.

It carries out the reaction (2R,3S)-3-isopropylmalate = (2S)-2-isopropylmalate. The protein operates within amino-acid biosynthesis; L-leucine biosynthesis; L-leucine from 3-methyl-2-oxobutanoate: step 2/4. Its function is as follows. Catalyzes the isomerization between 2-isopropylmalate and 3-isopropylmalate, via the formation of 2-isopropylmaleate. The polypeptide is 3-isopropylmalate dehydratase large subunit 1 (Salmonella choleraesuis (strain SC-B67)).